A 353-amino-acid chain; its full sequence is Beta-hexosaminidase (353 aa).

Residues aspartate 74, arginine 82, arginine 149, and 179 to 180 (KH) each bind substrate. Histidine 192 (proton donor/acceptor) is an active-site residue. The active-site Nucleophile is the aspartate 263.

This sequence belongs to the glycosyl hydrolase 3 family. NagZ subfamily.

The protein localises to the cytoplasm. It catalyses the reaction Hydrolysis of terminal non-reducing N-acetyl-D-hexosamine residues in N-acetyl-beta-D-hexosaminides.. It functions in the pathway cell wall biogenesis; peptidoglycan recycling. In terms of biological role, plays a role in peptidoglycan recycling by cleaving the terminal beta-1,4-linked N-acetylglucosamine (GlcNAc) from peptide-linked peptidoglycan fragments, giving rise to free GlcNAc, anhydro-N-acetylmuramic acid and anhydro-N-acetylmuramic acid-linked peptides. In Bordetella bronchiseptica (strain ATCC BAA-588 / NCTC 13252 / RB50) (Alcaligenes bronchisepticus), this protein is Beta-hexosaminidase.